Reading from the N-terminus, the 252-residue chain is Beta-carotene isomerase D27, chloroplastic (252 aa).

A chloroplast-targeting transit peptide spans 1–43 (MDSKMIAHNMSLTPTLAQWKKLRLKPKHTFVVGVLARPTDDIS).

It depends on Fe cation as a cofactor. As to expression, highly expressed in roots. Expressed at low levels in leaves and stems.

It is found in the plastid. The protein resides in the chloroplast. The catalysed reaction is all-trans-beta-carotene = 9-cis-beta-carotene. Its function is as follows. Involved in strigolactones biosynthesis by catalyzing the isomerization of the C9-C10 double bond in all-trans-beta-carotene leading to 9-cis-beta-carotene and providing the substrate for CCD7. Strigolactones are hormones that inhibit tillering and shoot branching through the MAX-dependent pathway, contribute to the regulation of shoot architectural response to phosphate-limiting conditions and function as rhizosphere signals that stimulate hyphal branching of arbuscular mycorrhizal fungi and trigger seed germination of root parasitic weeds. The polypeptide is Beta-carotene isomerase D27, chloroplastic (Medicago truncatula (Barrel medic)).